The primary structure comprises 484 residues: Crt homolog 2 (484 aa).

Over 1–57 (MSEEKLPLLSPLNENDIENDYKDENLKSDLDKLSNVKKQSIIQRFKDYLKNSISKQT) the chain is Cytoplasmic. The chain crosses the membrane as a helical span at residues 58–78 (ATVLVYVVLYILSGVINSLLL). Residues 79-94 (KKVMNVFTNYGFFLNQ) are Vacuolar-facing. The helical transmembrane segment at 95-115 (LTNYGYVPIFGAIVLYKILFT) threads the bilayer. Residues 116–128 (NDIPKDTRSFPQW) lie on the Cytoplasmic side of the membrane. A helical transmembrane segment spans residues 129 to 149 (KFVIMGALDAVTGYFVVIGGI). The Vacuolar segment spans residues 150–154 (KTTGP). A helical transmembrane segment spans residues 155-175 (LQQLLNQSVIPFTMLLSFIFL). Over 176–178 (KER) the chain is Cytoplasmic. The helical transmembrane segment at 179–199 (YSLIQLGGALIIIGGVVVSLI) threads the bilayer. The Vacuolar segment spans residues 200 to 210 (PSLTGGNTSGN). Asparagine 206 carries an N-linked (GlcNAc...) asparagine glycan. The helical transmembrane segment at 211 to 231 (MLFYNFFYLISMIPYAFSNVY) threads the bilayer. Topologically, residues 232–244 (KAIGFSTVEDMDV) are cytoplasmic. The chain crosses the membrane as a helical span at residues 245 to 265 (WYLQYFDALYQSLVGTVLFPI). At 266–328 (NNWLPPPSDM…LGCDNCHGAW (63 aa)) the chain is on the vacuolar side. Asparagine 302 carries N-linked (GlcNAc...) asparagine glycosylation. A helical membrane pass occupies residues 329-349 (VVVLIYMAVNVLYNVFILLVL). Over 350 to 355 (KHAGAT) the chain is Cytoplasmic. A helical transmembrane segment spans residues 356-378 (VFSIANTLRLPLTNIAFSFKFIM). The Vacuolar portion of the chain corresponds to 379 to 382 (GSDS). A helical membrane pass occupies residues 383–403 (NPFSGLSVAGLCIILLGLGGY). Residues 404–484 (RVGSMIKQKK…RNQNSIYGDQ (81 aa)) are Cytoplasmic-facing.

This sequence belongs to the CRT-like transporter family.

It localises to the vacuole membrane. Nutrient transporter. Involved in maintaining the osmotic homeostasis of the digestive vacuole. In Dictyostelium discoideum (Social amoeba), this protein is Crt homolog 2 (crtp2).